A 449-amino-acid polypeptide reads, in one-letter code: C4-dicarboxylate transport protein (449 aa).

Residues 1-20 form a disordered region; the sequence is MSALTESFGPVPSAKSKPPA. The segment covering 10-20 has biased composition (low complexity); it reads PVPSAKSKPPA. Helical transmembrane passes span 28–48, 66–86, 101–121, 167–187, 205–225, 241–261, 326–346, and 370–390; these read LLYLQVLVAIVLGVLLGWLSP, LIKMVIAPIIFCTVVSGIAHI, LYFEVVSSFALLIGLVVGNVV, GDILQVLLFAILFGFALMTLG, FGVIAIVMKAAPVGAFGAMAF, LIAVFYITAALFVVLVLGLIA, IYMTLATLFIAQALGVDLTWT, and FITLAATLSVVNPALVPGMAI.

This sequence belongs to the dicarboxylate/amino acid:cation symporter (DAACS) (TC 2.A.23) family.

The protein localises to the cell inner membrane. Functionally, responsible for the transport of dicarboxylates such as succinate, fumarate, and malate from the periplasm across the membrane. This Rhodopseudomonas palustris (strain BisB18) protein is C4-dicarboxylate transport protein.